Consider the following 472-residue polypeptide: Cell division protein FtsP (472 aa).

The tat-type signal signal peptide spans 1–32; it reads MSLSRRRFIQASGLALCAGGLPLQARASGAQA.

This sequence belongs to the FtsP family. In terms of processing, predicted to be exported by the Tat system. The position of the signal peptide cleavage has not been experimentally proven.

It is found in the periplasm. Functionally, cell division protein that is required for growth during stress conditions. May be involved in protecting or stabilizing the divisomal assembly under conditions of stress. This Edwardsiella tarda (strain FL6-60) protein is Cell division protein FtsP.